A 438-amino-acid chain; its full sequence is UPF0229 protein NGR_c12350 (438 aa).

A compositionally biased stretch (basic and acidic residues) spans 1–16; sequence MPNFIDRRLNPKDKSL. Disordered regions lie at residues 1–20 and 83–107; these read MPNFIDRRLNPKDKSLGNRQ and FAAGDRLPKRSSGGGATGAGAGTGQ. Over residues 94 to 105 the composition is skewed to gly residues; the sequence is SGGGATGAGAGT.

This sequence belongs to the UPF0229 family.

This chain is UPF0229 protein NGR_c12350, found in Sinorhizobium fredii (strain NBRC 101917 / NGR234).